A 730-amino-acid chain; its full sequence is Kinesin-like protein KIF2C (730 aa).

Positions 1 to 256 (MERLVATRLV…MDCHRISMAD (256 aa)) are globular. Residues 79-98 (NMPPQRNVSSQNHKRKTISK) form a disordered region. The tract at residues 211–242 (EQRAQNYERRMKRAQDYDTSVPNWEFGKMIKE) is negative regulator of microtubule-binding. The Kinesin motor domain occupies 262 to 592 (RICVCVRKRP…LRYADRVKEL (331 aa)). Residues Arg-268 and 352-359 (GQTGSGKT) contribute to the ATP site. Positions 599 to 730 (TNDDNLQMED…QISKKKRSNK (132 aa)) form a coiled coil.

Belongs to the TRAFAC class myosin-kinesin ATPase superfamily. Kinesin family. MCAK/KIF2 subfamily.

It localises to the cytoplasm. It is found in the cytoskeleton. The protein localises to the nucleus. Its subcellular location is the chromosome. The protein resides in the centromere. It localises to the kinetochore. Its function is as follows. Promotes ATP-dependent removal of tubulin dimers from microtubules. Regulates the turnover of microtubules at the kinetochore and functions in chromosome segregation during mitosis. May play a role in chromosome congression and may be required for the lateral to end-on conversion of the chromosome-microtubule attachment. The sequence is that of Kinesin-like protein KIF2C (kif2c) from Xenopus laevis (African clawed frog).